Reading from the N-terminus, the 613-residue chain is Dihydroxy-acid dehydratase (613 aa).

D81 is a Mg(2+) binding site. [2Fe-2S] cluster is bound at residue C122. Mg(2+)-binding residues include D123 and K124. N6-carboxylysine is present on K124. Residue C195 participates in [2Fe-2S] cluster binding. Position 491 (E491) interacts with Mg(2+). Catalysis depends on S517, which acts as the Proton acceptor.

This sequence belongs to the IlvD/Edd family. Homodimer. [2Fe-2S] cluster serves as cofactor. The cofactor is Mg(2+).

It catalyses the reaction (2R)-2,3-dihydroxy-3-methylbutanoate = 3-methyl-2-oxobutanoate + H2O. The catalysed reaction is (2R,3R)-2,3-dihydroxy-3-methylpentanoate = (S)-3-methyl-2-oxopentanoate + H2O. It participates in amino-acid biosynthesis; L-isoleucine biosynthesis; L-isoleucine from 2-oxobutanoate: step 3/4. Its pathway is amino-acid biosynthesis; L-valine biosynthesis; L-valine from pyruvate: step 3/4. Functionally, functions in the biosynthesis of branched-chain amino acids. Catalyzes the dehydration of (2R,3R)-2,3-dihydroxy-3-methylpentanoate (2,3-dihydroxy-3-methylvalerate) into 2-oxo-3-methylpentanoate (2-oxo-3-methylvalerate) and of (2R)-2,3-dihydroxy-3-methylbutanoate (2,3-dihydroxyisovalerate) into 2-oxo-3-methylbutanoate (2-oxoisovalerate), the penultimate precursor to L-isoleucine and L-valine, respectively. The protein is Dihydroxy-acid dehydratase of Nitrobacter hamburgensis (strain DSM 10229 / NCIMB 13809 / X14).